A 365-amino-acid chain; its full sequence is Flagellin 1 (365 aa).

This sequence belongs to the bacterial flagellin family.

The protein resides in the secreted. It localises to the bacterial flagellum. In terms of biological role, flagellin is the subunit protein which polymerizes to form the filaments of bacterial flagella. The sequence is that of Flagellin 1 (fliC1) from Proteus mirabilis.